Consider the following 265-residue polypeptide: MKRIFVQNRELVVPGTLLAQGPYKNGRGTFREGSRIYSTVIGLVDIKGNTIRVIPLEGPYIPEVGDNVIGKIVDVKFSSWVVDIGAPYLANLKIQDFTDEKIDLLRTDLRKFFDIGDIIYGKVKAITEVNNIDLTTKGMPFNGGPLKGGQIVKITPSRVPRVIGRGGSMINMIKKLTMTRIIVGQNGWIWVNGKNEALEKLAIEAILKIDRESHTKGLTDRIKSLLLSRLQELKEKGVIEEIPELEEEPQEETEVNNNDGETRRT.

In terms of domain architecture, S1 motif spans 65–137 (GDNVIGKIVD…EVNNIDLTTK (73 aa)). In terms of domain architecture, KH spans 147–205 (KGGQIVKITPSRVPRVIGRGGSMINMIKKLTMTRIIVGQNGWIWVNGKNEALEKLAIEA). The span at 241 to 254 (EIPELEEEPQEETE) shows a compositional bias: acidic residues. The disordered stretch occupies residues 241-265 (EIPELEEEPQEETEVNNNDGETRRT).

Belongs to the RRP4 family. In terms of assembly, component of the archaeal exosome complex. Forms a trimer of Rrp4 and/or Csl4 subunits. The trimer associates with a hexameric ring-like arrangement composed of 3 Rrp41-Rrp42 heterodimers.

Its subcellular location is the cytoplasm. Its function is as follows. Non-catalytic component of the exosome, which is a complex involved in RNA degradation. Increases the RNA binding and the efficiency of RNA degradation. Confers strong poly(A) specificity to the exosome. In Pyrococcus horikoshii (strain ATCC 700860 / DSM 12428 / JCM 9974 / NBRC 100139 / OT-3), this protein is Exosome complex component Rrp4.